Consider the following 241-residue polypeptide: MVKDTLFSTPIAKLGDFIFDENVAEVFPDMIQRSVPGYSNIITAIGMLAERFVTADSNVYDLGCSRGAATLSARRNINQPNVKIIGIDNSQPMVERCRQHIAAYHSEIPVEILCNDIRHVEIKNASMVILNFTLQFLPPEDRIALLTKIYEGLNPNGVLVLSEKFRFEDTKINHLLIDLHHQFKRANGYSELEVSQKRTALENVMRTDSIETHKVRLKNVGFSQVELWFQCFNFGSMIAVK.

S-adenosyl-L-methionine contacts are provided by residues Tyr38, 63–65 (GCS), 88–89 (DN), 116–117 (DI), Asn131, and Arg198.

This sequence belongs to the class I-like SAM-binding methyltransferase superfamily. Cx-SAM synthase family. As to quaternary structure, homodimer.

The catalysed reaction is prephenate + S-adenosyl-L-methionine = carboxy-S-adenosyl-L-methionine + 3-phenylpyruvate + H2O. Its function is as follows. Catalyzes the conversion of S-adenosyl-L-methionine (SAM) to carboxy-S-adenosyl-L-methionine (Cx-SAM). The chain is Carboxy-S-adenosyl-L-methionine synthase from Haemophilus influenzae (strain ATCC 51907 / DSM 11121 / KW20 / Rd).